A 903-amino-acid chain; its full sequence is Protein translocase subunit SecA (903 aa).

ATP contacts are provided by residues Gln89, 107 to 111 (GEGKT), and Asp502. Zn(2+) is bound by residues Cys887, Cys889, Cys898, and His899.

The protein belongs to the SecA family. As to quaternary structure, monomer and homodimer. Part of the essential Sec protein translocation apparatus which comprises SecA, SecYEG and auxiliary proteins SecDF-YajC and YidC. It depends on Zn(2+) as a cofactor.

It is found in the cell inner membrane. The protein resides in the cytoplasm. The catalysed reaction is ATP + H2O + cellular proteinSide 1 = ADP + phosphate + cellular proteinSide 2.. In terms of biological role, part of the Sec protein translocase complex. Interacts with the SecYEG preprotein conducting channel. Has a central role in coupling the hydrolysis of ATP to the transfer of proteins into and across the cell membrane, serving both as a receptor for the preprotein-SecB complex and as an ATP-driven molecular motor driving the stepwise translocation of polypeptide chains across the membrane. The chain is Protein translocase subunit SecA from Jannaschia sp. (strain CCS1).